A 198-amino-acid polypeptide reads, in one-letter code: Pre-histone-like nucleoprotein (198 aa).

Ser-2 is modified (N-acetylserine; by host). Residues 2-24 constitute a propeptide that is removed on maturation; it reads SILISPSNNTGWGLRFPSKMFGG. A disordered region spans residues 24–55; that stretch reads GAKKRSDQHPVRVRGHYRAPWGAHKRGRTGRT. An N6-acetyllysine; by host mark is found at Lys-27 and Lys-48. A compositionally biased stretch (basic residues) spans 34–52; sequence VRVRGHYRAPWGAHKRGRT. Thr-55 and Thr-74 each carry phosphothreonine; by host. Phosphoserine; by host occurs at positions 183 and 185. Residues 188–198 carry the Nuclear localization signal motif; the sequence is RVPVRTRPPRN.

Belongs to the adenoviridae histone-like nucleoprotein family. In terms of assembly, interacts with the core-capsid bridging protein; this interaction bridges the virus core to the capsid. Interacts with host NPM1; this interaction might play a role in placing the pre-histone-like nucleoprotein on the viral DNA or regulating viral gene expression. Interacts with host HMGB1; this interaction inhibits host immune response. In terms of processing, cleaved near the N-terminus by the viral protease during virion maturation to form the mature protein.

It is found in the virion. It localises to the host nucleus. The protein localises to the host nucleolus. Its function is as follows. Plays a role in the inhibition of host immune response within the nucleus. Interacts with cellular nucleosomes and immobilizes the host immune danger signal HMGB1 on chromatin. In turn, prevents HMGB1 release out of the cell and thus decreases inflammation. Also plays a role in the wrapping and condensation of the viral DNA. May also promote viral genome import into the nucleus. In Human adenovirus C serotype 2 (HAdV-2), this protein is Pre-histone-like nucleoprotein.